Here is a 336-residue protein sequence, read N- to C-terminus: Phenylalanine--tRNA ligase alpha subunit (336 aa).

Glu-259 contributes to the Mg(2+) binding site.

This sequence belongs to the class-II aminoacyl-tRNA synthetase family. Phe-tRNA synthetase alpha subunit type 1 subfamily. Tetramer of two alpha and two beta subunits. The cofactor is Mg(2+).

It is found in the cytoplasm. It carries out the reaction tRNA(Phe) + L-phenylalanine + ATP = L-phenylalanyl-tRNA(Phe) + AMP + diphosphate + H(+). The polypeptide is Phenylalanine--tRNA ligase alpha subunit (Tropheryma whipplei (strain TW08/27) (Whipple's bacillus)).